We begin with the raw amino-acid sequence, 468 residues long: 23S rRNA (uracil(1939)-C(5))-methyltransferase RlmD (468 aa).

Positions 12-70 (SKQLSPKLSLNVTQLDHLGAGMAQHQGKVVFIPQALPGERVSVQLTDQKKSFAKAKLIK) constitute a TRAM domain. The [4Fe-4S] cluster site is built by Cys83, Cys89, Cys92, and Cys174. Residues Gln296, Phe325, Asn330, Glu351, Asp378, and Asp398 each coordinate S-adenosyl-L-methionine. Cys424 (nucleophile) is an active-site residue.

This sequence belongs to the class I-like SAM-binding methyltransferase superfamily. RNA M5U methyltransferase family. RlmD subfamily.

It carries out the reaction uridine(1939) in 23S rRNA + S-adenosyl-L-methionine = 5-methyluridine(1939) in 23S rRNA + S-adenosyl-L-homocysteine + H(+). Catalyzes the formation of 5-methyl-uridine at position 1939 (m5U1939) in 23S rRNA. This is 23S rRNA (uracil(1939)-C(5))-methyltransferase RlmD from Shewanella denitrificans (strain OS217 / ATCC BAA-1090 / DSM 15013).